Reading from the N-terminus, the 428-residue chain is MRRDYVDPGYSPKDTDLICEFHIEPAAGISFEEASTHMAGESSIDSWTEISTLSPELAARLKPHVFYLDADTQTVRVAYSEDLFELGSVPQVLSAVAGNIFSMKIVDNLRLQDITFPKSMLREFEGPNFGLPGVRDIVGVKDRPLVGTIVKPKVGLTSEMHAEVAYNAFAGGCDLVKDDENLTDQKFNGFEKRAELTLKIAEKAEAETGERKMYLCNITAPTCEEMIRRLHVLKDLGASYAMIDIVPTGWTALQTLREAAADEGLALHAHRCMHSAFTRNPRHGVSMLLVAKLCRLIGLDQLHIGTVVGKMHGDKDEVLSIRDECVLDTVPADPEQHVLAQDWGGLKPMFPVASGGLAPTMIPDLYSIFGKEVIMQFGGGIHAHPMGTAAGAAACRQALEASLEGISLQDYAKDHKELEAALGKWLEK.

Lys151 serves as the catalytic Proton acceptor. Lys153 serves as a coordination point for substrate. Residues Lys177, Asp179, and Glu180 each coordinate Mg(2+). Lys177 carries the N6-carboxylysine modification. His270 acts as the Proton acceptor in catalysis. Substrate-binding positions include Arg271, His303, 354-356 (SGG), and 376-379 (QFGG).

It belongs to the RuBisCO large chain family. Type III subfamily. In terms of assembly, homodimer. In contrast to form I RuBisCO, the form III RuBisCO is composed solely of large subunits. The cofactor is Mg(2+).

The enzyme catalyses 2 (2R)-3-phosphoglycerate + 2 H(+) = D-ribulose 1,5-bisphosphate + CO2 + H2O. It carries out the reaction D-ribulose 1,5-bisphosphate + O2 = 2-phosphoglycolate + (2R)-3-phosphoglycerate + 2 H(+). Reversibly inhibited by O(2). Catalyzes the addition of molecular CO(2) and H(2)O to ribulose 1,5-bisphosphate (RuBP), generating two molecules of 3-phosphoglycerate (3-PGA). Functions in an archaeal AMP degradation pathway, together with AMP phosphorylase and R15P isomerase. The sequence is that of Ribulose bisphosphate carboxylase from Methanosarcina acetivorans (strain ATCC 35395 / DSM 2834 / JCM 12185 / C2A).